Here is a 241-residue protein sequence, read N- to C-terminus: 3-deoxy-manno-octulosonate cytidylyltransferase (241 aa).

The protein belongs to the KdsB family.

It localises to the cytoplasm. It carries out the reaction 3-deoxy-alpha-D-manno-oct-2-ulosonate + CTP = CMP-3-deoxy-beta-D-manno-octulosonate + diphosphate. It functions in the pathway nucleotide-sugar biosynthesis; CMP-3-deoxy-D-manno-octulosonate biosynthesis; CMP-3-deoxy-D-manno-octulosonate from 3-deoxy-D-manno-octulosonate and CTP: step 1/1. Its pathway is bacterial outer membrane biogenesis; lipopolysaccharide biosynthesis. In terms of biological role, activates KDO (a required 8-carbon sugar) for incorporation into bacterial lipopolysaccharide in Gram-negative bacteria. This Rickettsia typhi (strain ATCC VR-144 / Wilmington) protein is 3-deoxy-manno-octulosonate cytidylyltransferase.